The following is an 896-amino-acid chain: Zinc finger protein 574 (896 aa).

C2H2-type zinc fingers lie at residues 16–38 (YVCSECNQLYGSLEEVLMHQNSH) and 76–98 (YQCLECGQLLMSPSQLLEHQELH). Residue serine 113 is modified to Phosphoserine. The segment at 126-148 (YECVDCKALFASQELWLNHRQTH) adopts a C2H2-type 3 zinc-finger fold. A Phosphoserine modification is found at serine 164. The C2H2-type 4 zinc-finger motif lies at 214–236 (YKCSECSQLFQLPADFLEHQATH). Residues 239–301 (APVPESQEPA…RARRNNSGEA (63 aa)) form a disordered region. Over residues 247–257 (PALQQEVQASS) the composition is skewed to polar residues. Residues 274–287 (HSYELRNGEAIGRD) show a composition bias toward basic and acidic residues. Serine 298 bears the Phosphoserine mark. C2H2-type zinc fingers lie at residues 309 to 331 (LFCSACDQLFLSPHQLQQHLRSH), 336 to 358 (FKCPLCSRVFPSPSSLDQHLGDH), 364 to 386 (FLCVDCGLAFGTEALLLAHRRAH), and 392 to 413 (HSCPCGKTFVNLTKFLYHRRTH). The interval 434-460 (FPEPAPAETGEPEAPEPPVSEETSAGP) is disordered. Residues 466-489 (YRCLLCSREFGKALQLTRHQRFVH) form a C2H2-type 9 zinc finger. Residues 495-517 (HKCSICGKMFKKKSHVRNHLRTH) form a C2H2-type 10; degenerate zinc finger. 4 consecutive C2H2-type zinc fingers follow at residues 523-545 (FPCPDCSKPFNSPANLARHRLTH), 551-573 (YRCGDCGKAFTQSSTLRQHRLVH), 579-601 (YRCQECGVRFHRPYRLLMHRYHH), and 607-630 (YKCRECPRSFLLRRLLEVHQLVVH). The C2H2-type 15; degenerate zinc-finger motif lies at 636–659 (HRCPSCGAAFPSSLRLREHRCAAA). The segment at 667 to 689 (FECGTCGKKVGSAARLQAHEAAH) adopts a C2H2-type 16 zinc-finger fold. The interval 687–733 (AAHAAAGPGEVLAKEPPAPRAPRATRAPVASPAALGSTATASPAAPA) is disordered. The segment covering 707-732 (APRATRAPVASPAALGSTATASPAAP) has biased composition (low complexity). The residue at position 717 (serine 717) is a Phosphoserine. Threonine 724 is subject to Phosphothreonine. At serine 728 the chain carries Phosphoserine. C2H2-type zinc fingers lie at residues 738 to 760 (LECSECKKLFSTETSLQVHRRIH), 766 to 788 (YPCPDCGKAFRQSTHLKDHRRLH), 794 to 816 (FACEVCGKAFAISMRLAEHRRIH), and 822 to 844 (YSCPDCGKSYRSFSNLWKHRKTH). Arginine 832 carries the post-translational modification Asymmetric dimethylarginine.

The protein belongs to the krueppel C2H2-type zinc-finger protein family.

Its subcellular location is the nucleus. In terms of biological role, may be involved in transcriptional regulation. This chain is Zinc finger protein 574 (ZNF574), found in Homo sapiens (Human).